The following is a 251-amino-acid chain: Squamosa promoter-binding-like protein 4 (251 aa).

Positions 1–15 (MDWMPPPKPTSPRSP) are enriched in pro residues. A disordered region spans residues 1-64 (MDWMPPPKPT…RAEEGGGGGG (64 aa)). Positions 24–43 (AAVPGSSSGEVSAAAAAAAA) are enriched in low complexity. The SBP-type zinc finger occupies 65–142 (EVRCQVEGCG…YDHNARRRKP (78 aa)). Zn(2+) is bound by residues C68, C73, C90, H93, C109, C112, H116, and C128. Positions 125–141 (KRSCRRRLYDHNARRRK) match the Bipartite nuclear localization signal motif.

In terms of tissue distribution, expressed in stems, leaf sheaths, and young panicles.

It localises to the nucleus. Functionally, trans-acting factor that binds specifically to the consensus nucleotide sequence 5'-TNCGTACAA-3'. May be involved in panicle development. The chain is Squamosa promoter-binding-like protein 4 (SPL4) from Oryza sativa subsp. japonica (Rice).